Reading from the N-terminus, the 249-residue chain is LexA repressor (249 aa).

Residues 1–25 (MAAAATGGRATSQPKKTTKGLTPRQ) are disordered. A DNA-binding region (H-T-H motif) is located at residues 45-65 (MREIGDTVGLASLSSVTHQLS). Active-site for autocatalytic cleavage activity residues include S173 and K210.

Belongs to the peptidase S24 family. In terms of assembly, homodimer.

The enzyme catalyses Hydrolysis of Ala-|-Gly bond in repressor LexA.. Represses a number of genes involved in the response to DNA damage (SOS response), including recA and lexA. In the presence of single-stranded DNA, RecA interacts with LexA causing an autocatalytic cleavage which disrupts the DNA-binding part of LexA, leading to derepression of the SOS regulon and eventually DNA repair. This Pseudarthrobacter chlorophenolicus (strain ATCC 700700 / DSM 12829 / CIP 107037 / JCM 12360 / KCTC 9906 / NCIMB 13794 / A6) (Arthrobacter chlorophenolicus) protein is LexA repressor.